We begin with the raw amino-acid sequence, 361 residues long: UDP-N-acetylglucosamine--N-acetylmuramyl-(pentapeptide) pyrophosphoryl-undecaprenol N-acetylglucosamine transferase (361 aa).

UDP-N-acetyl-alpha-D-glucosamine is bound by residues 11–13 (TGG), asparagine 120, arginine 161, serine 188, and glutamine 282.

The protein belongs to the glycosyltransferase 28 family. MurG subfamily.

The protein resides in the cell inner membrane. The enzyme catalyses di-trans,octa-cis-undecaprenyl diphospho-N-acetyl-alpha-D-muramoyl-L-alanyl-D-glutamyl-meso-2,6-diaminopimeloyl-D-alanyl-D-alanine + UDP-N-acetyl-alpha-D-glucosamine = di-trans,octa-cis-undecaprenyl diphospho-[N-acetyl-alpha-D-glucosaminyl-(1-&gt;4)]-N-acetyl-alpha-D-muramoyl-L-alanyl-D-glutamyl-meso-2,6-diaminopimeloyl-D-alanyl-D-alanine + UDP + H(+). Its pathway is cell wall biogenesis; peptidoglycan biosynthesis. Functionally, cell wall formation. Catalyzes the transfer of a GlcNAc subunit on undecaprenyl-pyrophosphoryl-MurNAc-pentapeptide (lipid intermediate I) to form undecaprenyl-pyrophosphoryl-MurNAc-(pentapeptide)GlcNAc (lipid intermediate II). The protein is UDP-N-acetylglucosamine--N-acetylmuramyl-(pentapeptide) pyrophosphoryl-undecaprenol N-acetylglucosamine transferase of Prochlorococcus marinus (strain MIT 9303).